The primary structure comprises 540 residues: GMP synthase [glutamine-hydrolyzing] (540 aa).

The 191-residue stretch at 26 to 216 (IIIILDFGSQ…VYHICECEPT (191 aa)) folds into the Glutamine amidotransferase type-1 domain. Catalysis depends on Cys-103, which acts as the Nucleophile. Residues His-190 and Glu-192 contribute to the active site. The GMPS ATP-PPase domain maps to 217–415 (WTTAAFVEEA…VGLPEEIVQR (199 aa)). Position 244 to 250 (244 to 250 (SGGVDSS)) interacts with ATP.

In terms of assembly, homodimer.

It carries out the reaction XMP + L-glutamine + ATP + H2O = GMP + L-glutamate + AMP + diphosphate + 2 H(+). The protein operates within purine metabolism; GMP biosynthesis; GMP from XMP (L-Gln route): step 1/1. Catalyzes the synthesis of GMP from XMP. The chain is GMP synthase [glutamine-hydrolyzing] from Nostoc sp. (strain PCC 7120 / SAG 25.82 / UTEX 2576).